A 717-amino-acid polypeptide reads, in one-letter code: F-box only protein 42 (717 aa).

Acidic residues predominate over residues 1–30 (MASSSDSEDDSFMAVDQEETVLEGTMDQDE). The disordered stretch occupies residues 1 to 34 (MASSSDSEDDSFMAVDQEETVLEGTMDQDEEPHP). The 50-residue stretch at 44–93 (NRSMSELPEEVLEYILSFLSPYQEHKTAALVCKQWYRLIKGVAHQCYHGF) folds into the F-box domain. Kelch repeat units follow at residues 132-184 (SMYV…VYKD), 186-242 (LVLF…VIDD), 244-293 (MIVF…VIDD), and 295-342 (TILI…LWCH). The segment at 361 to 474 (RAPLSPSLNS…PSTPSAPEGY (114 aa)) is disordered. The span at 363–376 (PLSPSLNSRPSPIS) shows a compositional bias: low complexity. A phosphoserine mark is found at serine 365 and serine 373. Position 378 is a phosphothreonine (threonine 378). Polar residues-rich tracts occupy residues 416-426 (QRQTPSGSREG) and 455-469 (SLDSPVQAISPSTPS). Residue serine 552 is modified to Phosphoserine. Residues 570 to 596 (GPSASAALSPPLGSSPGSPGSQSLSSG) are compositionally biased toward low complexity. Residues 570-631 (GPSASAALSP…GHHPPQSLNV (62 aa)) form a disordered region.

In terms of assembly, component of some SCF complex, composed of CUL1, SKP1, RBX1 and FBXO42. Interacts (via the kelch domain) with p53/TP53; interaction is direct.

Substrate-recognition component of some SCF (SKP1-CUL1-F-box protein)-type E3 ubiquitin ligase complex. Specifically recognizes p53/TP53, promoting its ubiquitination and degradation. This Homo sapiens (Human) protein is F-box only protein 42 (FBXO42).